Consider the following 561-residue polypeptide: Dihydroxy-acid dehydratase (561 aa).

Cys51 lines the [2Fe-2S] cluster pocket. Asp83 is a Mg(2+) binding site. Cys124 is a [2Fe-2S] cluster binding site. Mg(2+) is bound by residues Asp125 and Lys126. At Lys126 the chain carries N6-carboxylysine. [2Fe-2S] cluster is bound at residue Cys196. Glu447 contacts Mg(2+). The active-site Proton acceptor is the Ser473.

It belongs to the IlvD/Edd family. As to quaternary structure, homodimer. Requires [2Fe-2S] cluster as cofactor. Mg(2+) is required as a cofactor.

The enzyme catalyses (2R)-2,3-dihydroxy-3-methylbutanoate = 3-methyl-2-oxobutanoate + H2O. It catalyses the reaction (2R,3R)-2,3-dihydroxy-3-methylpentanoate = (S)-3-methyl-2-oxopentanoate + H2O. Its pathway is amino-acid biosynthesis; L-isoleucine biosynthesis; L-isoleucine from 2-oxobutanoate: step 3/4. It functions in the pathway amino-acid biosynthesis; L-valine biosynthesis; L-valine from pyruvate: step 3/4. Functions in the biosynthesis of branched-chain amino acids. Catalyzes the dehydration of (2R,3R)-2,3-dihydroxy-3-methylpentanoate (2,3-dihydroxy-3-methylvalerate) into 2-oxo-3-methylpentanoate (2-oxo-3-methylvalerate) and of (2R)-2,3-dihydroxy-3-methylbutanoate (2,3-dihydroxyisovalerate) into 2-oxo-3-methylbutanoate (2-oxoisovalerate), the penultimate precursor to L-isoleucine and L-valine, respectively. This Oceanobacillus iheyensis (strain DSM 14371 / CIP 107618 / JCM 11309 / KCTC 3954 / HTE831) protein is Dihydroxy-acid dehydratase.